A 151-amino-acid polypeptide reads, in one-letter code: Ribosome maturation factor RimP (151 aa).

The protein belongs to the RimP family.

It localises to the cytoplasm. Its function is as follows. Required for maturation of 30S ribosomal subunits. This is Ribosome maturation factor RimP from Vibrio campbellii (strain ATCC BAA-1116).